A 169-amino-acid polypeptide reads, in one-letter code: Interleukin-36 gamma (169 aa).

The propeptide occupies 1-17 (MRGTPGDADGGGRAVYQ).

The protein belongs to the IL-1 family. As to quaternary structure, interacts with cargo receptor TMED10; the interaction mediates the translocation from the cytoplasm into the ERGIC (endoplasmic reticulum-Golgi intermediate compartment) and thereby secretion. N-terminal truncation leads to a dramatic enhancement of its activity (&gt;1000-fold). Proteolytically cleaved by cathepsin CTSG. Highly expressed in tissues containing epithelial cells: skin, lung, stomach and esophagus. Expressed in bronchial epithelial. In skin is expressed only in keratinocytes but not in fibroblasts, endothelial cells or melanocytes. Up-regulated in lesional psoriasis skin. Expressed in monocyte-derived dendritic cells and M1 macrophages.

The protein resides in the cytoplasm. It localises to the secreted. Functionally, cytokine that binds to and signals through the IL1RL2/IL-36R receptor which in turn activates NF-kappa-B and MAPK signaling pathways in target cells. Part of the IL-36 signaling system that is thought to be present in epithelial barriers and to take part in local inflammatory response; similar to the IL-1 system with which it shares the coreceptor IL1RAP. Seems to be involved in skin inflammatory response by acting on keratinocytes, dendritic cells and indirectly on T-cells to drive tissue infiltration, cell maturation and cell proliferation. In cultured keratinocytes induces the expression of macrophage, T-cell, and neutrophil chemokines, such as CCL3, CCL4, CCL5, CCL2, CCL17, CCL22, CL20, CCL5, CCL2, CCL17, CCL22, CXCL8, CCL20 and CXCL1; also stimulates its own expression and that of the prototypic cutaneous pro-inflammatory parameters TNF-alpha, S100A7/psoriasin and inducible NOS. May play a role in pro-inflammatory responses during particular neutrophilic airway inflammation: activates mitogen-activated protein kinases and NF-kappa B in primary lung fibroblasts, and stimulates the expression of IL-8 and CXCL3 and Th17 chemokine CCL20 in lung fibroblasts. May be involved in the innate immune response to fungal pathogens, such as Aspergillus fumigatus. This chain is Interleukin-36 gamma, found in Homo sapiens (Human).